We begin with the raw amino-acid sequence, 142 residues long: Cytochrome c-type biogenesis protein CcmE (142 aa).

Over Met1–Lys2 the chain is Cytoplasmic. Residues Gly3–Gly23 traverse the membrane as a helical; Signal-anchor for type II membrane protein segment. Residues Leu24–Gln142 are Periplasmic-facing. Heme-binding residues include His118 and Tyr122.

This sequence belongs to the CcmE/CycJ family.

The protein localises to the cell inner membrane. Functionally, heme chaperone required for the biogenesis of c-type cytochromes. Transiently binds heme delivered by CcmC and transfers the heme to apo-cytochromes in a process facilitated by CcmF and CcmH. This Thermus thermophilus (strain ATCC BAA-163 / DSM 7039 / HB27) protein is Cytochrome c-type biogenesis protein CcmE.